The following is a 336-amino-acid chain: Dihydroorotate dehydrogenase (quinone) (336 aa).

FMN is bound by residues 62–66 (AGLDK) and T86. Position 66 (K66) interacts with substrate. Substrate is bound at residue 111 to 115 (NRMGF). 2 residues coordinate FMN: N139 and N172. Residue N172 participates in substrate binding. S175 functions as the Nucleophile in the catalytic mechanism. Residue N177 coordinates substrate. Residues K217 and T245 each contribute to the FMN site. 246–247 (NT) is a binding site for substrate. Residues G268, G297, and 318–319 (YS) each bind FMN.

Belongs to the dihydroorotate dehydrogenase family. Type 2 subfamily. Monomer. It depends on FMN as a cofactor.

It is found in the cell membrane. It carries out the reaction (S)-dihydroorotate + a quinone = orotate + a quinol. The protein operates within pyrimidine metabolism; UMP biosynthesis via de novo pathway; orotate from (S)-dihydroorotate (quinone route): step 1/1. In terms of biological role, catalyzes the conversion of dihydroorotate to orotate with quinone as electron acceptor. In Escherichia coli (strain SE11), this protein is Dihydroorotate dehydrogenase (quinone).